A 361-amino-acid chain; its full sequence is uncharacterized protein (361 aa).

2 disordered regions span residues 53–75 (KNISNNNNNNNNNNNNVCGNINN) and 150–211 (NYNN…YHHY). The segment covering 150–198 (NYNNYNNNNNNNNNNNNNNNNNNNNNNNNNNNNNNKNNNKNNNNKPNNF) has biased composition (low complexity). Positions 199–211 (IHHHHHHHHYHHY) are enriched in basic residues. A helical transmembrane segment spans residues 225–245 (IFIGLMAFLILFILMVIGLLI).

It localises to the membrane. This is an uncharacterized protein from Dictyostelium discoideum (Social amoeba).